Reading from the N-terminus, the 157-residue chain is Small ribosomal subunit protein uS7 (157 aa).

It belongs to the universal ribosomal protein uS7 family. In terms of assembly, part of the 30S ribosomal subunit. Contacts proteins S9 and S11.

In terms of biological role, one of the primary rRNA binding proteins, it binds directly to 16S rRNA where it nucleates assembly of the head domain of the 30S subunit. Is located at the subunit interface close to the decoding center, probably blocks exit of the E-site tRNA. The chain is Small ribosomal subunit protein uS7 from Caldicellulosiruptor saccharolyticus (strain ATCC 43494 / DSM 8903 / Tp8T 6331).